Consider the following 156-residue polypeptide: uncharacterized protein (156 aa).

This is an uncharacterized protein from Schizosaccharomyces pombe (strain 972 / ATCC 24843) (Fission yeast).